Here is a 391-residue protein sequence, read N- to C-terminus: Acetate kinase (391 aa).

Residue asparagine 7 participates in Mg(2+) binding. Lysine 14 contributes to the ATP binding site. Arginine 88 contributes to the substrate binding site. Aspartate 145 serves as the catalytic Proton donor/acceptor. ATP contacts are provided by residues 203 to 207 (HAGNG), 278 to 280 (DAR), and 326 to 330 (GMGEN). Residue glutamate 378 coordinates Mg(2+).

This sequence belongs to the acetokinase family. As to quaternary structure, homodimer. Mg(2+) serves as cofactor. Mn(2+) is required as a cofactor.

It localises to the cytoplasm. The catalysed reaction is acetate + ATP = acetyl phosphate + ADP. The protein operates within metabolic intermediate biosynthesis; acetyl-CoA biosynthesis; acetyl-CoA from acetate: step 1/2. In terms of biological role, catalyzes the formation of acetyl phosphate from acetate and ATP. Can also catalyze the reverse reaction. The polypeptide is Acetate kinase (Phytoplasma mali (strain AT)).